Reading from the N-terminus, the 79-residue chain is D-alanyl carrier protein (79 aa).

The region spanning 1–77 (MDVKAEVIEI…KIVEGVTELR (77 aa)) is the Carrier domain. Ser35 is subject to O-(pantetheine 4'-phosphoryl)serine.

It belongs to the DltC family. Post-translationally, 4'-phosphopantetheine is transferred from CoA to a specific serine of apo-DCP.

The protein localises to the cytoplasm. It participates in cell wall biogenesis; lipoteichoic acid biosynthesis. Functionally, carrier protein involved in the D-alanylation of lipoteichoic acid (LTA). The loading of thioester-linked D-alanine onto DltC is catalyzed by D-alanine--D-alanyl carrier protein ligase DltA. The DltC-carried D-alanyl group is further transferred to cell membrane phosphatidylglycerol (PG) by forming an ester bond, probably catalyzed by DltD. D-alanylation of LTA plays an important role in modulating the properties of the cell wall in Gram-positive bacteria, influencing the net charge of the cell wall. The polypeptide is D-alanyl carrier protein (Streptococcus gordonii (strain Challis / ATCC 35105 / BCRC 15272 / CH1 / DL1 / V288)).